Here is a 160-residue protein sequence, read N- to C-terminus: Cyclic pyranopterin monophosphate synthase (160 aa).

Residues 77 to 79 and 115 to 116 contribute to the substrate site; these read LCH and ME. The active site involves Asp130.

Belongs to the MoaC family. As to quaternary structure, homohexamer; trimer of dimers.

It catalyses the reaction (8S)-3',8-cyclo-7,8-dihydroguanosine 5'-triphosphate = cyclic pyranopterin phosphate + diphosphate. It participates in cofactor biosynthesis; molybdopterin biosynthesis. Functionally, catalyzes the conversion of (8S)-3',8-cyclo-7,8-dihydroguanosine 5'-triphosphate to cyclic pyranopterin monophosphate (cPMP). In Parvibaculum lavamentivorans (strain DS-1 / DSM 13023 / NCIMB 13966), this protein is Cyclic pyranopterin monophosphate synthase.